The sequence spans 330 residues: MKIAIDAMGGDHAPKAVVLGAMKAIKEYSDLHITLVGKEEGIRQYLTSEERITILHTDEKIESTDEPVRAVRRKKQASMVLAAQQVKDGVADACISAGSTGALMAAGLFVVGRMEGIERPALSPTMPTVDGEGFVMLDVGANVDAKPIHLYQYAVMGSVYAEKVRGIKNPRVGLLNVGTEDGKGNELSKQVFAMLKDAPINFVGNVESRDLLQGVADVVVCDGFTGNVALKSLEGTALALFSMLKEQLMSSFTSKLAAAVLKPKLMVLKDKMDYSEYGGAALFGLKAPVIKAHGSSNDQSIFSAIRQTREMVAKEVIPTISSVMEKEPLQ.

It belongs to the PlsX family. As to quaternary structure, homodimer. Probably interacts with PlsY.

It is found in the cytoplasm. It carries out the reaction a fatty acyl-[ACP] + phosphate = an acyl phosphate + holo-[ACP]. It participates in lipid metabolism; phospholipid metabolism. Its function is as follows. Catalyzes the reversible formation of acyl-phosphate (acyl-PO(4)) from acyl-[acyl-carrier-protein] (acyl-ACP). This enzyme utilizes acyl-ACP as fatty acyl donor, but not acyl-CoA. This Bacillus mycoides (strain KBAB4) (Bacillus weihenstephanensis) protein is Phosphate acyltransferase.